The chain runs to 239 residues: Glutathione S-transferase verG (239 aa).

One can recognise a GST N-terminal domain in the interval 18 to 101 (KPLIFVMEGR…YLSNKYDAKR (84 aa)). The GST C-terminal domain occupies 107-237 (NAAENLEICN…ELDSRKEIAI (131 aa)).

This sequence belongs to the GST superfamily.

It catalyses the reaction RX + glutathione = an S-substituted glutathione + a halide anion + H(+). It functions in the pathway mycotoxin biosynthesis. Its function is as follows. Glutathione S-transferase; part of the gene cluster that mediates the biosynthesis of 11'-deoxyverticillin A, one of the dimeric epipolythiodioxopiperazines (ETPs) from the verticillin family that act as mycotoxins. 11'-deoxyverticillin A is required for normal conidiation. The nonribosomal peptide synthetase verP is speculated to be responsible for condensation of amino acids to form the carbon skeleton of verticillin, whereas the cluster-specific tailoring enzymes are involved in further modifications leading to the production of 11'-deoxyverticillin A. This is Glutathione S-transferase verG from Clonostachys rogersoniana.